The chain runs to 479 residues: uncharacterized protein (479 aa).

The next 10 membrane-spanning stretches (helical) occupy residues 11–31 (ILMAIPLITFLLPAPDGLSLI), 43–63 (IVGLVLKPYGEPVILLAAIAV), 90–110 (GTTWLIFTAFTLSSAFVITGL), 151–171 (SGGIIFPIINSVVVALGSDPE), 195–215 (IFLTAMAPNALALSLMAPILG), 223–243 (WFLAASVPGLLCLFLIPLICY), 274–294 (KALSVLFVIALFGWIFSNSLH), 295–315 (INATIVAIIVMVLCIVLSIVT), 328–348 (TLVWYGGIIGMSGLLEKSGFF), and 447–467 (WWITGAIIAFGSLIIHLTIGM).

Belongs to the SLC13A/DASS transporter (TC 2.A.47) family. DIT1 subfamily.

It is found in the cell inner membrane. This is an uncharacterized protein from Haemophilus influenzae (strain ATCC 51907 / DSM 11121 / KW20 / Rd).